The sequence spans 147 residues: Cyanate hydratase (147 aa).

Residues Arg88, Glu91, and Ser114 contribute to the active site.

This sequence belongs to the cyanase family.

It carries out the reaction cyanate + hydrogencarbonate + 3 H(+) = NH4(+) + 2 CO2. Functionally, catalyzes the reaction of cyanate with bicarbonate to produce ammonia and carbon dioxide. In Dechloromonas aromatica (strain RCB), this protein is Cyanate hydratase.